Reading from the N-terminus, the 628-residue chain is tRNA (carboxymethyluridine(34)-5-O)-methyltransferase alkbh8 (628 aa).

The 81-residue stretch at 43-123 folds into the RRM domain; it reads QSLVVANGGL…ITLYLSFVEK (81 aa). Positions 218–335 constitute a Fe2OG dioxygenase domain; that stretch reads DPDQLTINQY…RTSFTFRKVR (118 aa). 225–227 contacts 2-oxoglutarate; sequence NQY. Residues histidine 236 and aspartate 238 each coordinate Fe cation. Histidine 240 is a binding site for Zn(2+). Residue histidine 290 participates in Fe cation binding. 2-oxoglutarate-binding residues include arginine 326 and arginine 332. Residues cysteine 339, cysteine 341, and cysteine 347 each contribute to the Zn(2+) site. The interval 410 to 628 is methyltransferase domain; sequence ADVGCGNGKY…GNWCVILEKL (219 aa). The disordered stretch occupies residues 563–582; the sequence is PTNKSKVTPENKEQNEKEHG. Basic and acidic residues predominate over residues 569 to 582; sequence VTPENKEQNEKEHG.

The protein belongs to the alkB family. The cofactor is Fe(2+).

The protein localises to the cytoplasm. The protein resides in the nucleus. The enzyme catalyses 5-(carboxymethyl)uridine(34) in tRNA + S-adenosyl-L-methionine = 5-(2-methoxy-2-oxoethyl)uridine(34) in tRNA + S-adenosyl-L-homocysteine. In terms of biological role, catalyzes the methylation of 5-carboxymethyl uridine to 5-methylcarboxymethyl uridine at the wobble position of the anticodon loop in tRNA via its methyltransferase domain. Catalyzes the last step in the formation of 5-methylcarboxymethyl uridine at the wobble position of the anticodon loop in target tRNA. Has a preference for tRNA(Arg) and tRNA(Glu), and does not bind tRNA(Lys). Binds tRNA and catalyzes the iron and alpha-ketoglutarate dependent hydroxylation of 5-methylcarboxymethyl uridine at the wobble position of the anticodon loop in tRNA via its dioxygenase domain, giving rise to 5-(S)-methoxycarbonylhydroxymethyluridine; has a preference for tRNA(Gly). Required for normal survival after DNA damage. May inhibit apoptosis and promote cell survival and angiogenesis. In Xenopus tropicalis (Western clawed frog), this protein is tRNA (carboxymethyluridine(34)-5-O)-methyltransferase alkbh8 (alkbh8).